Reading from the N-terminus, the 256-residue chain is Thiazole synthase (256 aa).

Lys-102 functions as the Schiff-base intermediate with DXP in the catalytic mechanism. Residues Gly-163, 189–190 (AG), and 211–212 (AT) each bind 1-deoxy-D-xylulose 5-phosphate.

Belongs to the ThiG family. As to quaternary structure, homotetramer. Forms heterodimers with either ThiH or ThiS.

It localises to the cytoplasm. It carries out the reaction [ThiS sulfur-carrier protein]-C-terminal-Gly-aminoethanethioate + 2-iminoacetate + 1-deoxy-D-xylulose 5-phosphate = [ThiS sulfur-carrier protein]-C-terminal Gly-Gly + 2-[(2R,5Z)-2-carboxy-4-methylthiazol-5(2H)-ylidene]ethyl phosphate + 2 H2O + H(+). It functions in the pathway cofactor biosynthesis; thiamine diphosphate biosynthesis. Its function is as follows. Catalyzes the rearrangement of 1-deoxy-D-xylulose 5-phosphate (DXP) to produce the thiazole phosphate moiety of thiamine. Sulfur is provided by the thiocarboxylate moiety of the carrier protein ThiS. In vitro, sulfur can be provided by H(2)S. The sequence is that of Thiazole synthase from Nocardia farcinica (strain IFM 10152).